The following is a 210-amino-acid chain: Small ribosomal subunit protein bS6 (210 aa).

A disordered region spans residues 99–210; the sequence is PLPTKRNTKS…KDTKEVKEEG (112 aa). Positions 120 to 210 are enriched in basic and acidic residues; the sequence is NDTKEVKEAK…KDTKEVKEEG (91 aa).

This sequence belongs to the bacterial ribosomal protein bS6 family.

Its function is as follows. Binds together with bS18 to 16S ribosomal RNA. In Prochlorococcus marinus (strain SARG / CCMP1375 / SS120), this protein is Small ribosomal subunit protein bS6.